We begin with the raw amino-acid sequence, 276 residues long: Inositol-1-monophosphatase ImpA (276 aa).

Mg(2+) is bound by residues Glu74, Asp90, Ile92, and Asp93. Substrate is bound at residue Glu74. Residues 92–95 (IDGT), Arg192, and Asp221 each bind substrate. Asp221 serves as a coordination point for Mg(2+).

It belongs to the inositol monophosphatase superfamily. It depends on Mg(2+) as a cofactor.

It catalyses the reaction a myo-inositol phosphate + H2O = myo-inositol + phosphate. It participates in polyol metabolism; myo-inositol biosynthesis; myo-inositol from D-glucose 6-phosphate: step 2/2. Functionally, catalyzes the dephosphorylation of inositol 1-phosphate (I-1-P) to yield free myo-inositol, a key metabolite in mycobacteria. The chain is Inositol-1-monophosphatase ImpA (impA) from Mycolicibacterium smegmatis (strain ATCC 700084 / mc(2)155) (Mycobacterium smegmatis).